A 175-amino-acid polypeptide reads, in one-letter code: NADH-ubiquinone oxidoreductase chain 6 (175 aa).

A run of 5 helical transmembrane segments spans residues 1–21, 27–47, 49–69, 88–108, and 149–169; these read MMTY…VGFS, VYGG…IMNF, GSFL…VVFG, VVFG…LYVL, and YGMW…VVVM.

This sequence belongs to the complex I subunit 6 family. Core subunit of respiratory chain NADH dehydrogenase (Complex I) which is composed of 45 different subunits.

The protein resides in the mitochondrion inner membrane. It carries out the reaction a ubiquinone + NADH + 5 H(+)(in) = a ubiquinol + NAD(+) + 4 H(+)(out). Its function is as follows. Core subunit of the mitochondrial membrane respiratory chain NADH dehydrogenase (Complex I) which catalyzes electron transfer from NADH through the respiratory chain, using ubiquinone as an electron acceptor. Essential for the catalytic activity and assembly of complex I. This is NADH-ubiquinone oxidoreductase chain 6 (MT-ND6) from Pteropus scapulatus (Little red flying fox).